Here is a 354-residue protein sequence, read N- to C-terminus: Glyceraldehyde-3-phosphate dehydrogenase (354 aa).

NAD(+) contacts are provided by residues 11-12 (TI) and Gly108. 137–139 (SCN) contacts D-glyceraldehyde 3-phosphate. The active-site Nucleophile is Cys138. Residue Arg166 participates in NAD(+) binding. 192–193 (HG) serves as a coordination point for D-glyceraldehyde 3-phosphate. Gln299 is an NAD(+) binding site.

Belongs to the glyceraldehyde-3-phosphate dehydrogenase family. Homotetramer.

The protein localises to the cytoplasm. The enzyme catalyses D-glyceraldehyde 3-phosphate + phosphate + NADP(+) = (2R)-3-phospho-glyceroyl phosphate + NADPH + H(+). The catalysed reaction is D-glyceraldehyde 3-phosphate + phosphate + NAD(+) = (2R)-3-phospho-glyceroyl phosphate + NADH + H(+). The protein operates within carbohydrate degradation; glycolysis; pyruvate from D-glyceraldehyde 3-phosphate: step 1/5. The protein is Glyceraldehyde-3-phosphate dehydrogenase of Haloarcula marismortui (strain ATCC 43049 / DSM 3752 / JCM 8966 / VKM B-1809) (Halobacterium marismortui).